Reading from the N-terminus, the 195-residue chain is HTH-type transcriptional regulator BetI (195 aa).

The 61-residue stretch at 8–68 (PIRRQQLIEA…ATMRYLISHL (61 aa)) folds into the HTH tetR-type domain. The segment at residues 31–50 (SIVQIARRAGVSNGIISHYF) is a DNA-binding region (H-T-H motif).

It functions in the pathway amine and polyamine biosynthesis; betaine biosynthesis via choline pathway [regulation]. In terms of biological role, repressor involved in the biosynthesis of the osmoprotectant glycine betaine. It represses transcription of the choline transporter BetT and the genes of BetAB involved in the synthesis of glycine betaine. The chain is HTH-type transcriptional regulator BetI from Pectobacterium atrosepticum (strain SCRI 1043 / ATCC BAA-672) (Erwinia carotovora subsp. atroseptica).